Consider the following 545-residue polypeptide: Thermosome subunit (545 aa).

Belongs to the TCP-1 chaperonin family. Forms an oligomeric complex of eight-membered rings.

Its function is as follows. Molecular chaperone; binds unfolded polypeptides in vitro, and has a weak ATPase activity. The protein is Thermosome subunit (ths) of Desulfurococcus sp. (strain SY).